Reading from the N-terminus, the 153-residue chain is Superoxide dismutase [Cu-Zn] (153 aa).

Cu cation is bound by residues His45, His47, and His62. The cysteines at positions 56 and 145 are disulfide-linked. His62, His70, His79, and Asp82 together coordinate Zn(2+). His119 is a Cu cation binding site.

The protein belongs to the Cu-Zn superoxide dismutase family. As to quaternary structure, homodimer. Requires Cu cation as cofactor. The cofactor is Zn(2+).

It is found in the cytoplasm. It carries out the reaction 2 superoxide + 2 H(+) = H2O2 + O2. In terms of biological role, destroys radicals which are normally produced within the cells and which are toxic to biological systems. The protein is Superoxide dismutase [Cu-Zn] (SOD) of Schistosoma mansoni (Blood fluke).